Consider the following 369-residue polypeptide: MTAAPELRPKSWIDSIAPYIPGSSKTLDGRPAVKLSSNENPLGTSLKAKEAYREAIDSLSLYPDSGATALREAIGACYNLDPARIIHGTGSDEILHLAAGAYAGQDDEVLYPRYSFSVYPLAARRVGATPVEAPDDDYRCSVDALLKAVTPRTRVVFIANPNNPTGTWITRAEVEKLHNGLPRNCLLVIDQAYAEYLDPECDDGALALAKNTKNVLVTRTFSKIYGLAAERIGWAYACPEIIDALNRIRAPFNVTIAGQKAAVAALEDQAFIQNSFKHNKKWRGWFENQMALLSNAGIRVIPSSANFTLLLFEGSLTAETAYKALMDHGYTTRWLPGQRLPHALRITIGSEKHMQDVAGILTSLVRQAL.

N6-(pyridoxal phosphate)lysine is present on Lys-223.

It belongs to the class-II pyridoxal-phosphate-dependent aminotransferase family. Histidinol-phosphate aminotransferase subfamily. Homodimer. It depends on pyridoxal 5'-phosphate as a cofactor.

It carries out the reaction L-histidinol phosphate + 2-oxoglutarate = 3-(imidazol-4-yl)-2-oxopropyl phosphate + L-glutamate. It functions in the pathway amino-acid biosynthesis; L-histidine biosynthesis; L-histidine from 5-phospho-alpha-D-ribose 1-diphosphate: step 7/9. Its function is as follows. Catalyzes the conversion of imidazole acetol phosphate to histidinol phosphate. Can also transaminate aromatic amino acids and histidine in addition to histidinol phosphate. The sequence is that of Histidinol-phosphate aminotransferase from Zymomonas mobilis subsp. mobilis (strain ATCC 31821 / ZM4 / CP4).